The sequence spans 157 residues: Stalk-specific protein B (157 aa).

Positions M1–A19 are cleaved as a signal peptide.

It is found in the secreted. The chain is Stalk-specific protein B (staB) from Dictyostelium discoideum (Social amoeba).